The sequence spans 483 residues: Zinc metalloproteinase/disintegrin (483 aa).

A signal peptide spans 1–20 (MIQVLLVTVCLAVFPYQGSS). Positions 21–190 (IILESGNVND…KASQLYLTPE (170 aa)) are excised as a propeptide. The 199-residue stretch at 197 to 395 (RYVKLAIVVD…YKPQCILNAP (199 aa)) folds into the Peptidase M12B domain. 3 disulfides stabilise this stretch: cysteine 308–cysteine 390, cysteine 352–cysteine 374, and cysteine 354–cysteine 357. Histidine 333 contacts Zn(2+). Glutamate 334 is a catalytic residue. Zn(2+)-binding residues include histidine 337 and histidine 343. Positions 396–411 (LRTDTVSTPVSGNELL) are excised as a propeptide. The region spanning 403–483 (TPVSGNELLE…SDDCPRWNDL (81 aa)) is the Disintegrin domain. Cystine bridges form between cysteine 417/cysteine 432, cysteine 419/cysteine 427, cysteine 426/cysteine 449, cysteine 440/cysteine 446, cysteine 445/cysteine 470, and cysteine 458/cysteine 477. The Cell attachment site motif lies at 462 to 464 (RGD).

Belongs to the venom metalloproteinase (M12B) family. P-II subfamily. P-IIa sub-subfamily. As to quaternary structure, monomer. Requires Zn(2+) as cofactor. Expressed by the venom gland.

It localises to the secreted. Impairs hemostasis in the envenomed animal. Functionally, inhibits ADP- and collagen-induced human platelet aggregation with IC(50) of 123 and 135 nM, respectively. Inhibits sperm-egg binding in a concentration-dependent manner, but has no effect on the fusion of sperm-egg. The protein is Zinc metalloproteinase/disintegrin of Protobothrops jerdonii (Jerdon's pitviper).